The following is a 137-amino-acid chain: Nucleoside diphosphate kinase (137 aa).

Residues lysine 9, phenylalanine 57, arginine 85, threonine 91, arginine 102, and asparagine 112 each contribute to the ATP site. Residue histidine 115 is the Pros-phosphohistidine intermediate of the active site.

The protein belongs to the NDK family. As to quaternary structure, homotetramer. Requires Mg(2+) as cofactor.

It is found in the cytoplasm. It carries out the reaction a 2'-deoxyribonucleoside 5'-diphosphate + ATP = a 2'-deoxyribonucleoside 5'-triphosphate + ADP. The enzyme catalyses a ribonucleoside 5'-diphosphate + ATP = a ribonucleoside 5'-triphosphate + ADP. Functionally, major role in the synthesis of nucleoside triphosphates other than ATP. The ATP gamma phosphate is transferred to the NDP beta phosphate via a ping-pong mechanism, using a phosphorylated active-site intermediate. The chain is Nucleoside diphosphate kinase from Geotalea daltonii (strain DSM 22248 / JCM 15807 / FRC-32) (Geobacter daltonii).